The primary structure comprises 217 residues: GTPase IMAP family member GIMD1 (217 aa).

Residues 6–217 enclose the AIG1-type G domain; the sequence is KMIINLAVFG…ENHFQVLSLA (212 aa). GTP-binding positions include 15–23, S36, and 148–150; these read GRTQSGKSS and HAE.

This sequence belongs to the TRAFAC class TrmE-Era-EngA-EngB-Septin-like GTPase superfamily. AIG1/Toc34/Toc159-like paraseptin GTPase family. IAN subfamily.

This Mus musculus (Mouse) protein is GTPase IMAP family member GIMD1 (Gimd1).